A 255-amino-acid chain; its full sequence is tRNA (guanine-N(1)-)-methyltransferase (255 aa).

S-adenosyl-L-methionine contacts are provided by residues G117 and 137–142 (LGDFVL).

This sequence belongs to the RNA methyltransferase TrmD family. In terms of assembly, homodimer.

The protein resides in the cytoplasm. It carries out the reaction guanosine(37) in tRNA + S-adenosyl-L-methionine = N(1)-methylguanosine(37) in tRNA + S-adenosyl-L-homocysteine + H(+). Specifically methylates guanosine-37 in various tRNAs. This is tRNA (guanine-N(1)-)-methyltransferase from Paracidovorax citrulli (strain AAC00-1) (Acidovorax citrulli).